The following is a 251-amino-acid chain: Flap endonuclease Xni (251 aa).

A Mg(2+)-binding site is contributed by aspartate 104. Positions 160-249 (VQPQQLPDYW…IDGNLQQLRL (90 aa)) constitute a 5'-3' exonuclease domain. Residues leucine 171, alanine 172, proline 180, valine 182, and isoleucine 185 each contribute to the K(+) site. Positions 184 to 189 (GIGPKS) are interaction with DNA.

The protein belongs to the Xni family. Mg(2+) serves as cofactor. It depends on K(+) as a cofactor.

In terms of biological role, has flap endonuclease activity. During DNA replication, flap endonucleases cleave the 5'-overhanging flap structure that is generated by displacement synthesis when DNA polymerase encounters the 5'-end of a downstream Okazaki fragment. The sequence is that of Flap endonuclease Xni from Shigella flexneri serotype 5b (strain 8401).